The primary structure comprises 213 residues: A-type ATP synthase subunit D (213 aa).

Belongs to the V-ATPase D subunit family. Has multiple subunits with at least A(3), B(3), C, D, E, F, H, I and proteolipid K(x).

The protein resides in the cell membrane. Its function is as follows. Component of the A-type ATP synthase that produces ATP from ADP in the presence of a proton gradient across the membrane. This is A-type ATP synthase subunit D from Saccharolobus islandicus (strain L.S.2.15 / Lassen #1) (Sulfolobus islandicus).